Reading from the N-terminus, the 378-residue chain is Myoglobin (378 aa).

H332 contributes to the heme binding site.

It belongs to the indoleamine 2,3-dioxygenase family. Homodimer. Heme serves as cofactor.

Functionally, serves a reserve supply of oxygen and facilitates the movement of oxygen within muscles. This is Myoglobin from Haliotis madaka (Giant abalone).